Reading from the N-terminus, the 316-residue chain is N-acetylmuramic acid 6-phosphate etherase (316 aa).

The segment at 1–23 (MAGFDPTLQPSDDRGHLLTEQSN) is disordered. Residues 66–229 (ISKRLSSGGR…STTVMVRLGK (164 aa)) enclose the SIS domain. The active-site Proton donor is the glutamate 94. Glutamate 125 is an active-site residue.

The protein belongs to the GCKR-like family. MurNAc-6-P etherase subfamily. In terms of assembly, homodimer.

It carries out the reaction N-acetyl-D-muramate 6-phosphate + H2O = N-acetyl-D-glucosamine 6-phosphate + (R)-lactate. It functions in the pathway amino-sugar metabolism; N-acetylmuramate degradation. Its function is as follows. Specifically catalyzes the cleavage of the D-lactyl ether substituent of MurNAc 6-phosphate, producing GlcNAc 6-phosphate and D-lactate. The sequence is that of N-acetylmuramic acid 6-phosphate etherase from Synechococcus sp. (strain CC9902).